An 81-amino-acid polypeptide reads, in one-letter code: ATP synthase subunit c (81 aa).

2 helical membrane-spanning segments follow: residues alanine 6–isoleucine 26 and leucine 57–alanine 77.

Belongs to the ATPase C chain family. In terms of assembly, F-type ATPases have 2 components, F(1) - the catalytic core - and F(0) - the membrane proton channel. F(1) has five subunits: alpha(3), beta(3), gamma(1), delta(1), epsilon(1). F(0) has four main subunits: a(1), b(1), b'(1) and c(10-14). The alpha and beta chains form an alternating ring which encloses part of the gamma chain. F(1) is attached to F(0) by a central stalk formed by the gamma and epsilon chains, while a peripheral stalk is formed by the delta, b and b' chains.

The protein localises to the cellular thylakoid membrane. In terms of biological role, f(1)F(0) ATP synthase produces ATP from ADP in the presence of a proton or sodium gradient. F-type ATPases consist of two structural domains, F(1) containing the extramembraneous catalytic core and F(0) containing the membrane proton channel, linked together by a central stalk and a peripheral stalk. During catalysis, ATP synthesis in the catalytic domain of F(1) is coupled via a rotary mechanism of the central stalk subunits to proton translocation. Its function is as follows. Key component of the F(0) channel; it plays a direct role in translocation across the membrane. A homomeric c-ring of between 10-14 subunits forms the central stalk rotor element with the F(1) delta and epsilon subunits. This chain is ATP synthase subunit c, found in Synechocystis sp. (strain ATCC 27184 / PCC 6803 / Kazusa).